A 681-amino-acid chain; its full sequence is Minichromosome maintenance domain-containing protein 2 (681 aa).

Ser-292 bears the Phosphoserine mark. The MCM domain maps to 533–621 (KQFTTEDFEK…LIAALLLEIS (89 aa)).

Predominantly expressed in the gonads and the brain. Not detected in the heart, lung, nor embryonic fibroblasts.

Plays an important role in meiotic recombination and associated DNA double-strand break repair. The polypeptide is Minichromosome maintenance domain-containing protein 2 (Mcmdc2) (Mus musculus (Mouse)).